A 533-amino-acid chain; its full sequence is Glucomannan 4-beta-mannosyltransferase 9 (533 aa).

Residues 37-57 (IVPALRLGVYICLTMSVMLFV) traverse the membrane as a helical segment. The active site involves Asp-136. Positions 195 and 197 each coordinate substrate. Asp-289 is an active-site residue. Helical transmembrane passes span 368-388 (LVAH…TVLV), 404-426 (VITL…WILF), 483-503 (VLEL…AFFG), and 510-530 (YLFA…GTIV).

Belongs to the glycosyltransferase 2 family. Plant cellulose synthase-like A subfamily. As to expression, expressed in cotyledons at the base of the hypocotyls, in root elongation zone, lateral root primordia, vascular system of young leaves, abscission zone of the pedicle,.

Its subcellular location is the golgi apparatus membrane. It carries out the reaction GDP-mannose + (glucomannan)n = GDP + (glucomannan)n+1.. In terms of biological role, possesses glucomannan synthase and mannan synthase activities in vitro. Mannan synthase consists of a 4-beta-mannosyltransferase activity on mannan using GDP-mannose. The beta-1,4-mannan product is the backbone for galactomannan synthesis by galactomannan galactosyltransferase. Galactomannan is a noncellulosic polysaccharides of plant cell wall. Required for lateral root development. The sequence is that of Glucomannan 4-beta-mannosyltransferase 9 from Arabidopsis thaliana (Mouse-ear cress).